Reading from the N-terminus, the 188-residue chain is dCTP deaminase (188 aa).

Residues 111-116 (KSTYAR), 135-137 (TLE), Q156, Y170, and Q180 each bind dCTP. E137 functions as the Proton donor/acceptor in the catalytic mechanism.

It belongs to the dCTP deaminase family. In terms of assembly, homotrimer.

It carries out the reaction dCTP + H2O + H(+) = dUTP + NH4(+). It participates in pyrimidine metabolism; dUMP biosynthesis; dUMP from dCTP (dUTP route): step 1/2. Its function is as follows. Catalyzes the deamination of dCTP to dUTP. The chain is dCTP deaminase from Nitrosococcus oceani (strain ATCC 19707 / BCRC 17464 / JCM 30415 / NCIMB 11848 / C-107).